A 378-amino-acid polypeptide reads, in one-letter code: Dof zinc finger protein 1 (378 aa).

Residues 28 to 38 show a composition bias toward low complexity; the sequence is GANPNPAATAP. The disordered stretch occupies residues 28–79; sequence GANPNPAATAPSSVTGGALRGGGGGGAPPVAGGAGAGSTERRARPQKEKALN. Positions 45–63 are enriched in gly residues; that stretch reads ALRGGGGGGAPPVAGGAGA. Residues 66–77 are compositionally biased toward basic and acidic residues; it reads TERRARPQKEKA. The segment at 78–132 adopts a Dof-type zinc-finger fold; it reads LNCPRCNSTNTKFCYYNNYSLQQPRYFCKTCRRYWTEGGSLRNVPVGGGSRKNKR. The Zn(2+) site is built by C80, C83, C105, and C108. Disordered regions lie at residues 116–148, 203–222, and 316–378; these read GSLR…ASTA, SLES…NGRG, and LKPT…GTSW. Positions 133–148 are enriched in low complexity; the sequence is SSSSAASASPASASTA. Gly residues-rich tracts occupy residues 323–338, 350–361, and 369–378; these read GTGG…GVDG, AGGGGGGPGGHD, and MIGGGSGTSW.

It localises to the nucleus. Transcription factor that may transactivate seed storage protein genes in developing seeds. The sequence is that of Dof zinc finger protein 1 from Oryza sativa subsp. japonica (Rice).